Reading from the N-terminus, the 403-residue chain is Succinoglycan biosynthesis protein ExoL (403 aa).

Its subcellular location is the cytoplasm. The protein operates within glycan metabolism; exopolysaccharide biosynthesis. Its function is as follows. Essential for succinoglycan (EPS I) synthesis and nodule infection. Glycosyltransferase needed for the addition of the third sugar (glucose), catalyzes the formation of a beta-1,4 linkage between the second and third sugars. In Rhizobium meliloti (strain 1021) (Ensifer meliloti), this protein is Succinoglycan biosynthesis protein ExoL (exoL).